The sequence spans 361 residues: Eukaryotic translation initiation factor 3 subunit F (361 aa).

Composition is skewed to low complexity over residues 1–32 and 42–73; these read MASPAVPANVPPATAAAAPAPVVTAAPASAPT and ATPAASPAPVSSDPAVAAPAAPGQTPASAPAP. A disordered region spans residues 1-91; the sequence is MASPAVPANV…PGPALPGPFP (91 aa). Alanine 2 carries the N-acetylalanine modification. Residue serine 52 is modified to Phosphoserine; by CDK11; in vitro. Residues 74–90 are compositionally biased toward pro residues; it reads AQTPAPSQPGPALPGPF. Residues 96–226 form the MPN domain; the sequence is VRLHPVILAS…IKAYVSTLMG (131 aa). N6-acetyllysine is present on lysine 242. Phosphoserine is present on serine 262.

It belongs to the eIF-3 subunit F family. As to quaternary structure, component of the eukaryotic translation initiation factor 3 (eIF-3) complex, which is composed of 13 subunits: EIF3A, EIF3B, EIF3C, EIF3D, EIF3E, EIF3F, EIF3G, EIF3H, EIF3I, EIF3J, EIF3K, EIF3L and EIF3M. The eIF-3 complex appears to include 3 stable modules: module A is composed of EIF3A, EIF3B, EIF3G and EIF3I; module B is composed of EIF3F, EIF3H, and EIF3M; and module C is composed of EIF3C, EIF3D, EIF3E, EIF3K and EIF3L. EIF3C of module C binds EIF3B of module A and EIF3H of module B, thereby linking the three modules. EIF3J is a labile subunit that binds to the eIF-3 complex via EIF3B. The eIF-3 complex may interact with RPS6KB1 under conditions of nutrient depletion. Mitogenic stimulation may lead to binding and activation of a complex composed of MTOR and RPTOR, leading to phosphorylation and release of RPS6KB1 and binding of EIF4B to eIF-3. Interacts with RNF139; the interaction leads to protein translation inhibitions in a ubiquitination-dependent manner. Interacts with DTX1, the interaction is required for deubiquitinating activity towards NOTCH1. Phosphorylation is enhanced upon serum stimulation. Phosphorylated during apoptosis by caspase-processed CDK11.

It is found in the cytoplasm. It carries out the reaction Thiol-dependent hydrolysis of ester, thioester, amide, peptide and isopeptide bonds formed by the C-terminal Gly of ubiquitin (a 76-residue protein attached to proteins as an intracellular targeting signal).. Its function is as follows. Component of the eukaryotic translation initiation factor 3 (eIF-3) complex, which is required for several steps in the initiation of protein synthesis. The eIF-3 complex associates with the 40S ribosome and facilitates the recruitment of eIF-1, eIF-1A, eIF-2:GTP:methionyl-tRNAi and eIF-5 to form the 43S pre-initiation complex (43S PIC). The eIF-3 complex stimulates mRNA recruitment to the 43S PIC and scanning of the mRNA for AUG recognition. The eIF-3 complex is also required for disassembly and recycling of post-termination ribosomal complexes and subsequently prevents premature joining of the 40S and 60S ribosomal subunits prior to initiation. The eIF-3 complex specifically targets and initiates translation of a subset of mRNAs involved in cell proliferation, including cell cycling, differentiation and apoptosis, and uses different modes of RNA stem-loop binding to exert either translational activation or repression. Deubiquitinates activated NOTCH1, promoting its nuclear import, thereby acting as a positive regulator of Notch signaling. This Mus musculus (Mouse) protein is Eukaryotic translation initiation factor 3 subunit F (Eif3f).